The chain runs to 331 residues: Nucleotide sugar transporter SLC35B4 (331 aa).

11 helical membrane-spanning segments follow: residues 4–24 (ALAVGLVFAGCCSNVIFLELL), 30–50 (GCGNIVTFAQFLFIAVEGFLF), 59–79 (PAIPIRYYAIMVTMFFTVSVV), 92–112 (LHMIFRSGSLIANMILGIIIL), 117–137 (SIFKYTSIALVSVGIFICTFM), 153–173 (GFQAFVWWLLGIGALTFALLM), 201–221 (ALPLPGFVFLASDIYDHAVLF), 229–249 (IPVIGVTLPIMWFYLLMNIIT), 251–267 (YVCIRGVFILTTECASL), 268–288 (TVTLVVTLRKFVSLIFSILYF), and 291–311 (PFTLWHWLGTLFVFIGTLMYT). The Mediates endoplasmic reticulum retention motif lies at 326-331 (KDSKKN).

Belongs to the nucleotide-sugar transporter family. SLC35B subfamily.

Its subcellular location is the endoplasmic reticulum membrane. The enzyme catalyses UDP-N-acetyl-alpha-D-glucosamine(in) + UDP-alpha-D-glucuronate(out) = UDP-N-acetyl-alpha-D-glucosamine(out) + UDP-alpha-D-glucuronate(in). It carries out the reaction UDP-alpha-D-xylose(in) + UDP-alpha-D-glucuronate(out) = UDP-alpha-D-xylose(out) + UDP-alpha-D-glucuronate(in). Functionally, antiporter that transports nucleotide sugars across the endoplasmic reticulum (ER) membrane in exchange for another nucleotide sugar. May couple UDP-alpha-D-glucuronate (UDP-GlcA) or UDP-alpha-D-xylose (UDP-Xyl) efflux to UDP-alpha-D-glucuronate (UDP-GlcA) influx into the ER lumen, which in turn stimulates glucuronidation and excretion of endobiotics and xenobiotics. The polypeptide is Nucleotide sugar transporter SLC35B4 (SLC35B4) (Pongo abelii (Sumatran orangutan)).